Here is a 295-residue protein sequence, read N- to C-terminus: Elongation factor Ts (295 aa).

The segment at 79-82 (TDFV) is involved in Mg(2+) ion dislocation from EF-Tu.

It belongs to the EF-Ts family.

The protein resides in the cytoplasm. Functionally, associates with the EF-Tu.GDP complex and induces the exchange of GDP to GTP. It remains bound to the aminoacyl-tRNA.EF-Tu.GTP complex up to the GTP hydrolysis stage on the ribosome. The protein is Elongation factor Ts of Mycoplasma capricolum subsp. capricolum (strain California kid / ATCC 27343 / NCTC 10154).